Consider the following 263-residue polypeptide: Malonyl-[acyl-carrier protein] O-methyltransferase (263 aa).

Belongs to the methyltransferase superfamily.

It catalyses the reaction malonyl-[ACP] + S-adenosyl-L-methionine = malonyl-[ACP] methyl ester + S-adenosyl-L-homocysteine. The protein operates within cofactor biosynthesis; biotin biosynthesis. Converts the free carboxyl group of a malonyl-thioester to its methyl ester by transfer of a methyl group from S-adenosyl-L-methionine (SAM). It allows to synthesize pimeloyl-ACP via the fatty acid synthetic pathway. The protein is Malonyl-[acyl-carrier protein] O-methyltransferase of Chlorobium luteolum (strain DSM 273 / BCRC 81028 / 2530) (Pelodictyon luteolum).